A 214-amino-acid polypeptide reads, in one-letter code: 3-demethoxyubiquinol 3-hydroxylase (214 aa).

Fe cation contacts are provided by glutamate 63, glutamate 93, histidine 96, glutamate 145, glutamate 177, and histidine 180.

Belongs to the COQ7 family. Fe cation is required as a cofactor.

It is found in the cell membrane. The catalysed reaction is a 5-methoxy-2-methyl-3-(all-trans-polyprenyl)benzene-1,4-diol + AH2 + O2 = a 3-demethylubiquinol + A + H2O. The protein operates within cofactor biosynthesis; ubiquinone biosynthesis. Catalyzes the hydroxylation of 2-nonaprenyl-3-methyl-6-methoxy-1,4-benzoquinol during ubiquinone biosynthesis. This is 3-demethoxyubiquinol 3-hydroxylase from Psychrobacter arcticus (strain DSM 17307 / VKM B-2377 / 273-4).